The chain runs to 990 residues: Pentatricopeptide repeat-containing protein At4g33170 (990 aa).

20 PPR repeats span residues 73 to 107, 109 to 139, 144 to 178, 179 to 209, 210 to 244, 279 to 313, 314 to 348, 349 to 379, 380 to 414, 415 to 450, 451 to 477, 481 to 515, 516 to 550, 551 to 581, 582 to 616, 617 to 651, 652 to 682, 683 to 717, 718 to 753, and 754 to 788; these read ERFLINNLISMYSKCGSLTYARRVFDKMPDRDLVS, NSILAAYAQSSECVVENIQQAFLLFRILRQD, SRMTLSPMLKLCLHSGYVWASESFHGYACKIGLDG, DEFVAGALVNIYLKFGKVKEGKVLFEEMPYR, DVVLWNLMLKAYLEMGFKEEAIDLSSAFHSSGLNP, EIIFRNKGLSEYLHSGQYSALLKCFADMVESDVEC, DQVTFILMLATAVKVDSLALGQQVHCMALKLGLDL, MLTVSNSLINMYCKLRKFGFARTVFDNMSER, DLISWNSVIAGIAQNGLEVEAVCLFMQLLRCGLKP, DQYTMTSVLKAASSLPEGLSLSKQVHVHAIKINNVS, DSFVSTALIDAYSRNRCMKEAEILFER, DLVAWNAMMAGYTQSHDGHKTLKLFALMHKQGERS, DDFTLATVFKTCGFLFAINQGKQVHAYAIKSGYDL, DLWVSSGILDMYVKCGDMSAAQFAFDSIPVP, DDVAWTTMISGCIENGEEERAFHVFSQMRLMGVLP, DEFTIATLAKASSCLTALEQGRQIHANALKLNCTN, DPFVGTSLVDMYAKCGSIDDAYCLFKRIEMM, NITAWNAMLVGLAQHGEGKETLQLFKQMKSLGIKP, DKVTFIGVLSACSHSGLVSEAYKHMRSMHGDYGIKP, and EIEHYSCLADALGRAGLVKQAENLIESMSMEASAS. The interval 789–864 is type E motif; it reads MYRTLLAACR…DPGFSWIEVK (76 aa). A type E(+) motif region spans residues 865–895; sequence NKIHIFVVDDRSNRQTELIYRKVKDMIRDIK. The segment at 896 to 990 is type DYW motif; it reads QEGYVPETDF…DGICSCGDYW (95 aa).

This sequence belongs to the PPR family. PCMP-H subfamily.

The chain is Pentatricopeptide repeat-containing protein At4g33170 (PCMP-H53) from Arabidopsis thaliana (Mouse-ear cress).